Here is an 85-residue protein sequence, read N- to C-terminus: U4-theraphotoxin-Hhn1z (85 aa).

Positions 1–22 (MKMTLIAILTCAAVLVLHTTAA) are cleaved as a signal peptide. Residues 23-48 (EELEAESQLMEVGMPDTELEAVDEER) constitute a propeptide that is removed on maturation. 3 disulfide bridges follow: Cys52–Cys66, Cys56–Cys77, and Cys71–Cys82.

This sequence belongs to the neurotoxin 12 (Hwtx-2) family. 02 (Hwtx-2) subfamily. Expressed by the venom gland.

Its subcellular location is the secreted. Functionally, postsynaptic neurotoxin. The chain is U4-theraphotoxin-Hhn1z from Cyriopagopus hainanus (Chinese bird spider).